The primary structure comprises 75 residues: Brevinin-2HS2A (75 aa).

The first 22 residues, 1–22 (MFTLKKPLLLLFFLGTISLSLC), serve as a signal peptide directing secretion. Positions 23–40 (QEERDADEEEGEMIEEEV) are excised as a propeptide. Residues Cys-69 and Cys-75 are joined by a disulfide bond.

The protein belongs to the frog skin active peptide (FSAP) family. Brevinin subfamily. In terms of tissue distribution, expressed by the skin glands.

It is found in the secreted. In terms of biological role, has antimicrobial activity against some Gram-positive bacteria and fungi but has no activity against a range of Gram-negative bacteria except P.faecalis. Has antimicrobial activity against the Gram-positive bacteria S.aureus ATCC 25923 (MIC=19 uM), B.licheniformis X39 (MIC=37.5 uM) and R.rhodochrous X15 (MIC=9.5 uM), is virtually inactive against E.faecium 091299 (MIC=150 uM) and S.carnosus KHS (MIC=150 uM) and inactive against E.faecalis 981. Active against the Gram-negative bacterium P.faecalis X29 (MIC=9.5 uM) and is inactive against E.coli, P.aeruginosa and S.typhi. Active against C.albicans ATCC 2002 (MIC=19 uM) and is also active against the slime mold 090223 (MIC=37.5 uM). Has extremely low hemolytic activity against human erythrocytes (LC(50)=300 uM). The sequence is that of Brevinin-2HS2A from Odorrana hainanensis (Odor frog).